The chain runs to 296 residues: MTTTWWELQILCDPSLEETIFWRLDDFGCRGMAGEQKGQSYLIRAYSPQAEFDHLDLAALALLLKQDAVLAHLPKPVVKWHLIDEEDWSSSWKSHWQPEEIGDRLLIYPAWLEVPTHSERLLLRLDPGSAFGTGAHQTTQLCLEALEMRLGQQPETQVIADIGCGSGILSIGSLLLGAKQTFGVDTDILAVTASNSNRALNNIEPERMVVAQGSIDTLPKMYPEPFDGIVCNILAEIIIELIPKMSAIAKPDTWGILSGILIEQIQPIADTLEQNGWAIAALWKKDEWCCFNIRRN.

4 residues coordinate S-adenosyl-L-methionine: Thr139, Gly163, Asp185, and Asn232.

This sequence belongs to the methyltransferase superfamily. PrmA family.

Its subcellular location is the cytoplasm. The catalysed reaction is L-lysyl-[protein] + 3 S-adenosyl-L-methionine = N(6),N(6),N(6)-trimethyl-L-lysyl-[protein] + 3 S-adenosyl-L-homocysteine + 3 H(+). Functionally, methylates ribosomal protein L11. This is Ribosomal protein L11 methyltransferase from Picosynechococcus sp. (strain ATCC 27264 / PCC 7002 / PR-6) (Agmenellum quadruplicatum).